A 479-amino-acid polypeptide reads, in one-letter code: Anaerobic nitric oxide reductase flavorubredoxin (479 aa).

The segment at 30-210 is zinc metallo-hydrolase; the sequence is LRGSSYNSYL…PFSRLVTPKI (181 aa). The Fe cation site is built by histidine 79, glutamate 81, aspartate 83, histidine 147, aspartate 166, and histidine 227. Positions 254–393 constitute a Flavodoxin-like domain; it reads ITIFYDTMSN…LCREHGREIA (140 aa). Residues 260 to 264 and 342 to 369 each bind FMN; these read TMSNN and AFGS…EMSL. The 52-residue stretch at 423-474 folds into the Rubredoxin-like domain; it reads GPRMQCSVCQWIYDPAKGEPMQDVAPGTPWSEVPDNFLCPECSLGKDVFEEL. 4 residues coordinate Fe cation: cysteine 428, cysteine 431, cysteine 461, and cysteine 464.

It in the N-terminal section; belongs to the zinc metallo-hydrolase group 3 family. In terms of assembly, homotetramer. Fe cation is required as a cofactor. The cofactor is FMN.

It localises to the cytoplasm. It participates in nitrogen metabolism; nitric oxide reduction. Its function is as follows. Anaerobic nitric oxide reductase; uses NADH to detoxify nitric oxide (NO), protecting several 4Fe-4S NO-sensitive enzymes. Has at least 2 reductase partners, only one of which (NorW, flavorubredoxin reductase) has been identified. NO probably binds to the di-iron center; electrons enter from the NorW at rubredoxin and are transferred sequentially to the FMN center and the di-iron center. Also able to function as an aerobic oxygen reductase. In Escherichia coli O139:H28 (strain E24377A / ETEC), this protein is Anaerobic nitric oxide reductase flavorubredoxin.